The primary structure comprises 457 residues: Protein unc-93 homolog A (457 aa).

The next 5 helical transmembrane spans lie at 8–28 (VLVV…LQSL), 42–62 (ALST…PLLI), 65–85 (LGCK…SVGN), 86–106 (FFAS…GAAP), and 140–160 (IFFL…SLVF). Asparagine 190 carries N-linked (GlcNAc...) asparagine glycosylation. The next 6 membrane-spanning stretches (helical) occupy residues 202-222 (TLLG…AAFL), 257-277 (LCLL…LSSE), 291-311 (FVGY…VLYG), 320-340 (AVLY…LLLW), 344-364 (ADHL…DAVW), and 395-415 (FVIA…YILL).

This sequence belongs to the unc-93 family. In terms of tissue distribution, expressed in testis, small intestine, spleen, prostate and ovary.

The protein localises to the cell membrane. The sequence is that of Protein unc-93 homolog A (UNC93A) from Homo sapiens (Human).